Consider the following 180-residue polypeptide: Secreted RxLR effector protein 19 (180 aa).

The signal sequence occupies residues 1-19 (MKLLLRALATFVLLNGVDS). Residues 25-171 (FQKCNVTGGP…IFALGALWGP (147 aa)) enclose the Jacalin-type lectin domain. The RxLR-dEER motif lies at 52–77 (RALRLCGVDFVDGIGVTIWDLSVEEN).

The protein belongs to the RxLR effector family.

Its subcellular location is the secreted. The protein resides in the host cytoplasm. It is found in the host nucleus. Its function is as follows. Effector that partially suppresses the tobacco programmed cell death induced by cell death-inducing proteins. The protein is Secreted RxLR effector protein 19 of Plasmopara viticola (Downy mildew of grapevine).